A 132-amino-acid chain; its full sequence is Small ribosomal subunit protein uS8 (132 aa).

The protein belongs to the universal ribosomal protein uS8 family. As to quaternary structure, part of the 30S ribosomal subunit. Contacts proteins S5 and S12.

One of the primary rRNA binding proteins, it binds directly to 16S rRNA central domain where it helps coordinate assembly of the platform of the 30S subunit. In Brevibacillus brevis (strain 47 / JCM 6285 / NBRC 100599), this protein is Small ribosomal subunit protein uS8.